The following is a 376-amino-acid chain: Erythronate-4-phosphate dehydrogenase (376 aa).

The substrate site is built by Ser-45 and Thr-67. Asp-147 lines the NAD(+) pocket. The active site involves Arg-209. Asp-233 contributes to the NAD(+) binding site. Glu-238 is an active-site residue. Residue His-255 is the Proton donor of the active site. Residue Gly-258 coordinates NAD(+). Substrate is bound at residue Tyr-259.

This sequence belongs to the D-isomer specific 2-hydroxyacid dehydrogenase family. PdxB subfamily. Homodimer.

The protein resides in the cytoplasm. The catalysed reaction is 4-phospho-D-erythronate + NAD(+) = (R)-3-hydroxy-2-oxo-4-phosphooxybutanoate + NADH + H(+). The protein operates within cofactor biosynthesis; pyridoxine 5'-phosphate biosynthesis; pyridoxine 5'-phosphate from D-erythrose 4-phosphate: step 2/5. In terms of biological role, catalyzes the oxidation of erythronate-4-phosphate to 3-hydroxy-2-oxo-4-phosphonooxybutanoate. This Shewanella sp. (strain MR-4) protein is Erythronate-4-phosphate dehydrogenase.